The primary structure comprises 98 residues: ATP synthase subunit alpha, chloroplastic (98 aa).

The protein belongs to the ATPase alpha/beta chains family. As to quaternary structure, F-type ATPases have 2 components, CF(1) - the catalytic core - and CF(0) - the membrane proton channel. CF(1) has five subunits: alpha(3), beta(3), gamma(1), delta(1), epsilon(1). CF(0) has four main subunits: a, b, b' and c.

The protein resides in the plastid. It localises to the chloroplast thylakoid membrane. The catalysed reaction is ATP + H2O + 4 H(+)(in) = ADP + phosphate + 5 H(+)(out). Functionally, produces ATP from ADP in the presence of a proton gradient across the membrane. The alpha chain is a regulatory subunit. In Populus euphratica (Euphrates poplar), this protein is ATP synthase subunit alpha, chloroplastic (atpA).